A 208-amino-acid chain; its full sequence is MTKGILGKKVGMTQIFTESGEFIPVTVIEATPNVVLQVKTVETDGYEAVQVGFDDKREVLSNKPAKGHVAKANTAPKRFIREFKNIEGLEVGAELSVEQFEAGDVVDVTGTSKGKGFQGVIKRHGQSRGPMAHGSRYHRRPGSMGPVAPNRVFKNKRLAGRMGGNRVTVQNLEIVQVIPEKNVILIKGNVPGAKKSLITIKSAVKAAK.

The segment at 116 to 148 (GFQGVIKRHGQSRGPMAHGSRYHRRPGSMGPVA) is disordered.

This sequence belongs to the universal ribosomal protein uL3 family. Part of the 50S ribosomal subunit. Forms a cluster with proteins L14 and L19.

In terms of biological role, one of the primary rRNA binding proteins, it binds directly near the 3'-end of the 23S rRNA, where it nucleates assembly of the 50S subunit. The protein is Large ribosomal subunit protein uL3 of Streptococcus pyogenes serotype M12 (strain MGAS2096).